Consider the following 348-residue polypeptide: MSKQTIVLLYGGRSAEREVSVLSAESVMRAINYDKFHVKTYFISQAGDFYKTQEFTVQPSESEKLMTNASLDASLKIKASDIYEDKAVVFPLLHGPMGEDGSIQGFLEILKMPYVGTNILSSSVAMDKITTKRVLESAGIPQVNYTVYIEGNDLEDCITETLETLSFPIFVKPANMGSSVGISKAESIEGLREAIALALKYDSRILIEQGVVAREIEVGLLGNTKVASTLPGEVIKDVAFYDYQAKYIDNKISMAIPATIDEGITSQMRYFAEQAFKAIGACGLSRCDFFLAEDGNLYLNELNTMPGFTQWSMYPLLWDNMGLSYSDLIEELVSLAEEMFQKRESHLI.

The 203-residue stretch at 132-334 folds into the ATP-grasp domain; it reads KRVLESAGIP…YSDLIEELVS (203 aa). 162–217 is an ATP binding site; it reads LETLSFPIFVKPANMGSSVGISKAESIEGLREAIALALKYDSRILIEQGVVAREIE. Asp288, Glu301, and Asn303 together coordinate Mg(2+).

Belongs to the D-alanine--D-alanine ligase family. The cofactor is Mg(2+). Mn(2+) is required as a cofactor.

The protein resides in the cytoplasm. The enzyme catalyses 2 D-alanine + ATP = D-alanyl-D-alanine + ADP + phosphate + H(+). Its pathway is cell wall biogenesis; peptidoglycan biosynthesis. Its function is as follows. Cell wall formation. In Streptococcus uberis (strain ATCC BAA-854 / 0140J), this protein is D-alanine--D-alanine ligase.